The primary structure comprises 622 residues: Peptidoglycan O-acetyltransferase OatA (622 aa).

11 consecutive transmembrane segments (helical) span residues 11–31 (YVPS…AYHL), 39–59 (GFIG…NILL), 81–101 (LIPA…FFHP), 143–163 (LWSL…LLVF), 173–193 (LLKI…ILYV), 212–232 (LLSG…PVVP), 237–257 (AVLN…TAFV), 267–287 (GGLL…SHPA), 307–327 (YGIY…LEIT), 334–354 (AILQ…FIET), and 387–407 (IAGV…VLSV). Residues 412–467 (EKQQTSVKTTTSTPDEKKDDKKEDKATKDKEADSNKASEQKETQKPDNKNKSAATP) form a disordered region. Residues 413–424 (KQQTSVKTTTST) show a composition bias toward low complexity. Residues 425–461 (PDEKKDDKKEDKATKDKEADSNKASEQKETQKPDNKN) show a composition bias toward basic and acidic residues. Active-site residues include Ser480, Asp600, and His603.

This sequence belongs to the acyltransferase 3 family.

It is found in the cell membrane. Its subcellular location is the secreted. It localises to the cell wall. Functionally, responsible for O-acetylation at the C6-hydroxyl group of N-acetylmuramyl residues, forming the corresponding N,6-O-diacetylmuramic acid of the peptidoglycan. O-acetylation of the peptidoglycan is the major determinant for lysozyme resistance. Critical for virulence and escape from innate immune response of the host. Involved at both early and later stages of listeriosis in the mouse model of infection. Required for successful host colonization and for intracellular survival of bacteria in macrophages of the infected host. Controls the production of inflammatory mediators in the liver of the infected host. Confers resistance to host antimicrobial molecules and to cell wall-targeting molecules such as beta-lactam antibiotics and bacteriocins. The protein is Peptidoglycan O-acetyltransferase OatA of Listeria monocytogenes serovar 1/2a (strain ATCC BAA-679 / EGD-e).